Here is a 486-residue protein sequence, read N- to C-terminus: Ribosome biogenesis protein YTM1 (486 aa).

Residues Arg-12–Arg-99 form a ubiquitin-like (UBL) domain region. WD repeat units follow at residues Gly-212–His-251, Gly-305–Leu-345, Pro-349–Ser-388, Pro-392–Phe-432, and Val-454–Glu-486. Residues Thr-249–Pro-299 form a disordered region.

Belongs to the WD repeat WDR12/YTM1 family. In terms of assembly, component of the NOP7 complex, composed of ERB1, NOP7 and YTM1. The complex is held together by ERB1, which interacts with NOP7 via its N-terminal domain and with YTM1 via a high-affinity interaction between the seven-bladed beta-propeller domains of the 2 proteins. The NOP7 complex associates with the 66S pre-ribosome. Interacts (via UBL domain) with MDN1 (via VWFA/MIDAS domain).

It is found in the nucleus. The protein localises to the nucleolus. It localises to the nucleoplasm. Functionally, component of the NOP7 complex, which is required for maturation of the 25S and 5.8S ribosomal RNAs and formation of the 60S ribosome. This is Ribosome biogenesis protein YTM1 from Cryptococcus neoformans var. neoformans serotype D (strain B-3501A) (Filobasidiella neoformans).